A 278-amino-acid chain; its full sequence is Rhomboid protease GlpG (278 aa).

The next 6 helical transmembrane spans lie at 94 to 114 (AGPL…LMLI), 143 to 163 (AFLH…WYLG), 175 to 195 (LLVL…LFSG), 196 to 216 (ANFG…WLTG), 224 to 241 (ISLP…LIAG), and 245 to 267 (ILGL…LMAF). S202 functions as the Nucleophile in the catalytic mechanism. H255 is a catalytic residue.

This sequence belongs to the peptidase S54 family.

The protein localises to the cell inner membrane. It catalyses the reaction Cleaves type-1 transmembrane domains using a catalytic dyad composed of serine and histidine that are contributed by different transmembrane domains.. In terms of biological role, rhomboid-type serine protease that catalyzes intramembrane proteolysis. The chain is Rhomboid protease GlpG from Yersinia pestis bv. Antiqua (strain Antiqua).